The following is a 106-amino-acid chain: Iron-sulfur cluster assembly protein CyaY (106 aa).

This sequence belongs to the frataxin family.

In terms of biological role, involved in iron-sulfur (Fe-S) cluster assembly. May act as a regulator of Fe-S biogenesis. The protein is Iron-sulfur cluster assembly protein CyaY of Cronobacter sakazakii (strain ATCC BAA-894) (Enterobacter sakazakii).